Consider the following 266-residue polypeptide: Integral membrane protein 2B (266 aa).

At 1-54 the chain is on the cytoplasmic side; sequence MVKVTFNSALAQKEAKKDEPKSGEEALIIPPDAVAVDCKDPDDVVPVGQRRAWC. Residues 55–75 traverse the membrane as a helical; Signal-anchor for type II membrane protein segment; the sequence is WCMCFGLAFMLAGVILGGAYL. Topologically, residues 76–266 are lumenal; the sequence is YKYFALQPDD…KFAVETLICS (191 aa). Residues 102–134 are necessary for interaction with APP and inhibitor effects on APP processing; sequence EPSADAPAALYQTIEENIKIFEEEEVEFISVPV. One can recognise a BRICHOS domain in the interval 137–231; the sequence is FADSDPANIV…LCHDKETYKL (95 aa). 2 disulfides stabilise this stretch: Cys-164-Cys-223 and Cys-248-Cys-265. An N-linked (GlcNAc...) asparagine glycan is attached at Asn-170.

Belongs to the ITM2 family. In terms of assembly, homodimer; disulfide-linked. Interacts with SPPL2A and SPPL2B. Interacts with APP. Mature BRI2 (mBRI2) interacts with the APP amyloid-beta A4 protein; the interaction occurs at the cell surface and in the endocytic compartments and enable alpha- and beta-secretase-induced APP cleavage inhibition. Mature BRI2 (mBRI2) interacts with the APP C99; the interaction occurs in the endocytic compartments and enable gamma-secretase-induced C99 cleavage inhibition. May form heterodimers with Bri23 peptide and APP amyloid-beta protein 40. Interacts with ADAM7 in sperm; the interaction increases following capacitation. The ectodomain C-terminal part of the imBRI2 is processed by furin producing a secreted Bri23 peptide and a mature BRI2, membrane form (mBRI2). The remaining part of the ectodomain of mBRI2 containing the BRICHOS domain is cleaved by ADAM10 and is secreted (BRI2C, soluble form). The membrane-bound N-terminal fragment (BRI2C, membrane form) is further proteolytically processed by SPPL2A and SPPL2B through regulated intramembrane proteolysis producing a secreted C-peptide and a BRI2 intracellular domain (BRI2 ICD) released in the cytosol. Shedding by ADAM10 facilitates intramembrane cleavage but is not absolutely required for BRI2 ICD generation. Post-translationally, glycosylation at Asn-170 is important for cell surface localization, but doesn't affect furin- and ADAM10-induced proteolytic processing. In terms of tissue distribution, ubiquitous. Expressed in brain.

It localises to the golgi apparatus membrane. The protein localises to the cell membrane. It is found in the endosome membrane. Its subcellular location is the secreted. In terms of biological role, plays a regulatory role in the processing of the amyloid-beta A4 precursor protein (APP) and acts as an inhibitor of the amyloid-beta peptide aggregation and fibrils deposition. Plays a role in the induction of neurite outgrowth. Functions as a protease inhibitor by blocking access of secretases to APP cleavage sites. Its function is as follows. Mature BRI2 (mBRI2) functions as a modulator of the amyloid-beta A4 precursor protein (APP) processing leading to a strong reduction in the secretion of secretase-processed amyloid-beta protein 40 and amyloid-beta protein 42. Bri23 peptide prevents aggregation of APP amyloid-beta protein 42 into toxic oligomers. In Homo sapiens (Human), this protein is Integral membrane protein 2B (ITM2B).